We begin with the raw amino-acid sequence, 175 residues long: Glucagon family neuropeptides (175 aa).

The N-terminal stretch at 1-23 is a signal peptide; sequence MSGNVYKTLLTLLVYGLIMHCNV. Residues 24–80 constitute a propeptide that is removed on maturation; the sequence is YCSPDRWTPVPGAKLEEEVYDEDGNTLQDFALRAGAPGGGGPRPRWGRCTALYYPPG. The tract at residues 149 to 157 is important for receptor binding; that stretch reads VKKYLAAVL. Leu157 carries the post-translational modification Leucine amide. Lysine amide is present on Lys168. The propeptide occupies 172 to 175; sequence VAYL.

Belongs to the glucagon family.

Its subcellular location is the secreted. Its function is as follows. Primary role of GRF is to release GH from the pituitary. In terms of biological role, PACAP is a neuropeptide involved in diverse array of physiological processes through activating the PACAP subfamily of class B1 G protein-coupled receptors: VIP receptor 1 (VIPR1), VIP receptor 2 (VIPR2), and PACAP type I receptor (ADCYAP1R1). Exerts neuroprotective and general cytoprotective effects due to anti-apoptotic, anti-inflammatory, and antioxidant actions. Promotes neuron projection development through the RAPGEF2/Rap1/B-Raf/ERK pathway. In chromaffin cells, induces long-lasting increase of intracellular calcium concentrations and neuroendocrine secretion. Involved in the control of glucose homeostasis, induces insulin secretion by pancreatic beta cells. PACAP exists in two bioactive forms from proteolysis of the same precursor protein, PACAP27 and PACAP38, which differ by eleven amino acid residues in the C-terminus. The protein is Glucagon family neuropeptides (ADCYAP1) of Gallus gallus (Chicken).